The primary structure comprises 638 residues: Chaperone protein DnaK (638 aa).

T199 is subject to Phosphothreonine; by autocatalysis. Low complexity predominate over residues 603 to 618 (YAQPGAEAGAEQQGSA). The tract at residues 603–638 (YAQPGAEAGAEQQGSANNADDDIVDAEFEEVNDDKK) is disordered. Acidic residues predominate over residues 621–638 (ADDDIVDAEFEEVNDDKK).

It belongs to the heat shock protein 70 family.

Functionally, acts as a chaperone. The polypeptide is Chaperone protein DnaK (Hydrogenovibrio crunogenus (strain DSM 25203 / XCL-2) (Thiomicrospira crunogena)).